A 203-amino-acid chain; its full sequence is Akirin-2 (203 aa).

Phosphoserine is present on residues Ser-18 and Ser-21. The Nuclear localization signal signature appears at 22-27; sequence PKRRRC. Ser-57 is modified (phosphoserine). The interval 115–137 is disordered; the sequence is PHAFLLSGPASPGTPSGTSSPLK. Residues 119–135 are compositionally biased toward low complexity; it reads LLSGPASPGTPSGTSSP. An SYVS motif motif is present at residues 200-203; sequence SYVS.

Belongs to the akirin family. In terms of assembly, homodimer. Interacts with IPO9; the interaction is direct. Associates with 20S and 26S proteasomes. Interacts with SMARCD1; promoting SWI/SNF complex recruitment. Interacts with NFKBIZ. Interacts with YWHAB. Polyubiquitinated. Polyubiquitination is dependent of UBR5 that extends pre-ubiquitinated AKIRIN2.

It localises to the nucleus. The protein resides in the cytoplasm. The protein localises to the membrane. Functionally, molecular adapter that acts as a bridge between a variety of multiprotein complexes, and which is involved in embryonic development, immunity, myogenesis and brain development. Plays a key role in nuclear protein degradation by promoting import of proteasomes into the nucleus: directly binds to fully assembled 20S proteasomes at one end and to nuclear import receptor IPO9 at the other end, bridging them together and mediating the import of pre-assembled proteasome complexes through the nuclear pore. Involved in innate immunity by regulating the production of interleukin-6 (IL6) downstream of Toll-like receptor (TLR): acts by bridging the NF-kappa-B inhibitor NFKBIZ and the SWI/SNF complex, leading to promote induction of IL6. Also involved in adaptive immunity by promoting B-cell activation. Involved in brain development: required for the survival and proliferation of cerebral cortical progenitor cells. Involved in myogenesis: required for skeletal muscle formation and skeletal development, possibly by regulating expression of muscle differentiation factors. This Bos taurus (Bovine) protein is Akirin-2.